The primary structure comprises 363 residues: UDP-N-acetylglucosamine--N-acetylmuramyl-(pentapeptide) pyrophosphoryl-undecaprenol N-acetylglucosamine transferase (363 aa).

UDP-N-acetyl-alpha-D-glucosamine contacts are provided by residues 10–12, asparagine 124, serine 195, isoleucine 249, and glutamine 294; that span reads TGG.

This sequence belongs to the glycosyltransferase 28 family. MurG subfamily.

Its subcellular location is the cell membrane. It carries out the reaction Mur2Ac(oyl-L-Ala-gamma-D-Glu-L-Lys-D-Ala-D-Ala)-di-trans,octa-cis-undecaprenyl diphosphate + UDP-N-acetyl-alpha-D-glucosamine = beta-D-GlcNAc-(1-&gt;4)-Mur2Ac(oyl-L-Ala-gamma-D-Glu-L-Lys-D-Ala-D-Ala)-di-trans,octa-cis-undecaprenyl diphosphate + UDP + H(+). It participates in cell wall biogenesis; peptidoglycan biosynthesis. Functionally, cell wall formation. Catalyzes the transfer of a GlcNAc subunit on undecaprenyl-pyrophosphoryl-MurNAc-pentapeptide (lipid intermediate I) to form undecaprenyl-pyrophosphoryl-MurNAc-(pentapeptide)GlcNAc (lipid intermediate II). This is UDP-N-acetylglucosamine--N-acetylmuramyl-(pentapeptide) pyrophosphoryl-undecaprenol N-acetylglucosamine transferase from Leuconostoc mesenteroides subsp. mesenteroides (strain ATCC 8293 / DSM 20343 / BCRC 11652 / CCM 1803 / JCM 6124 / NCDO 523 / NBRC 100496 / NCIMB 8023 / NCTC 12954 / NRRL B-1118 / 37Y).